The following is a 51-amino-acid chain: Toxin CSTX-18 (51 aa).

4 cysteine pairs are disulfide-bonded: C9–C22, C14–C27, C21–C36, and C29–C34.

Post-translationally, contains 4 disulfide bonds. Expressed by the venom gland.

The protein resides in the secreted. The chain is Toxin CSTX-18 from Cupiennius salei (American wandering spider).